The sequence spans 300 residues: Probable protein phosphatase 2C 3 (300 aa).

One can recognise a PPM-type phosphatase domain in the interval 23-298 (IFAASEMQGW…DNMTTILVYL (276 aa)). Mn(2+)-binding residues include Asp57, Gly58, Asp237, and Asp289.

The protein belongs to the PP2C family. The cofactor is Mg(2+). Requires Mn(2+) as cofactor.

Its subcellular location is the membrane. The catalysed reaction is O-phospho-L-seryl-[protein] + H2O = L-seryl-[protein] + phosphate. The enzyme catalyses O-phospho-L-threonyl-[protein] + H2O = L-threonyl-[protein] + phosphate. Functionally, enzyme with a broad specificity. The sequence is that of Probable protein phosphatase 2C 3 from Paramecium tetraurelia.